Reading from the N-terminus, the 566-residue chain is MKQSMVFSPTLREVPADAEIKSHQLLLRAGFMRQNASGIYSFLPFGLKVLHKVERIVREEMERAGAVELLMPAMQAAELWQESGRWYSYGSELMRMKDRNAREFALGATHEEVITDLVRDEIKSYKKLPLTLYQIQTKFRDEQRPRFGLLRGREFLMKDAYSFHATQESLDEVYDRLYKAYSNIFARCGLNFRAVIADSGAMGGKDTHEFMVLSDVGEDTIAYSDTSDYAANIEMAPVVATYTKSDEAEMALEKVATPDQKAIEEVSAFLNIEADKCIKSMVFKVDEKLVVVLVRGDHEVNDVKVKNVYGASVVELASHEEVKELLNCEVGSLGPIGVTGDIEIIADHAVASIVNGCSGANEEGFHYVNVNPERDFKVSQYTDLRFIQEGDQSPDGNGTILFARGIEVGHVFKLGTRYSEAMNATFLDENGKTQPLIMGCYGIGVSRTVAAIAEQFNDENGLVWPKAVAPFHVHVIPVNMKSDAQREMGENIYNSLQEKGYEVLLDDRAERAGVKFADADLFGLPVRVTVGKKADEGIVEVKVRATGESEEVKVEELQTYIANILK.

It belongs to the class-II aminoacyl-tRNA synthetase family. ProS type 1 subfamily. Homodimer.

It is found in the cytoplasm. It catalyses the reaction tRNA(Pro) + L-proline + ATP = L-prolyl-tRNA(Pro) + AMP + diphosphate. Functionally, catalyzes the attachment of proline to tRNA(Pro) in a two-step reaction: proline is first activated by ATP to form Pro-AMP and then transferred to the acceptor end of tRNA(Pro). As ProRS can inadvertently accommodate and process non-cognate amino acids such as alanine and cysteine, to avoid such errors it has two additional distinct editing activities against alanine. One activity is designated as 'pretransfer' editing and involves the tRNA(Pro)-independent hydrolysis of activated Ala-AMP. The other activity is designated 'posttransfer' editing and involves deacylation of mischarged Ala-tRNA(Pro). The misacylated Cys-tRNA(Pro) is not edited by ProRS. The chain is Proline--tRNA ligase from Bacillus cereus (strain G9842).